The primary structure comprises 440 residues: Xylose isomerase (440 aa).

2 residues coordinate Mg(2+): Asp307 and Asp309.

This sequence belongs to the xylose isomerase family. As to quaternary structure, homotetramer. Mg(2+) is required as a cofactor.

Its subcellular location is the cytoplasm. It carries out the reaction alpha-D-xylose = alpha-D-xylulofuranose. The protein is Xylose isomerase of Pectobacterium carotovorum subsp. carotovorum (strain PC1).